The following is a 221-amino-acid chain: Probable septum site-determining protein MinC (221 aa).

It belongs to the MinC family. Interacts with MinD and FtsZ.

Cell division inhibitor that blocks the formation of polar Z ring septums. Rapidly oscillates between the poles of the cell to destabilize FtsZ filaments that have formed before they mature into polar Z rings. Prevents FtsZ polymerization. The polypeptide is Probable septum site-determining protein MinC (Shewanella sp. (strain MR-7)).